The primary structure comprises 291 residues: Small ribosomal subunit biogenesis GTPase RsgA 2 (291 aa).

The CP-type G domain maps to 63 to 221 (ENALVRPPVA…VADTPGFSSI (159 aa)). Residues 112 to 115 (SKMD) and 164 to 172 (GQSGVGKST) each bind GTP. Residues C245, C250, H252, and C258 each coordinate Zn(2+).

This sequence belongs to the TRAFAC class YlqF/YawG GTPase family. RsgA subfamily. In terms of assembly, monomer. Associates with 30S ribosomal subunit, binds 16S rRNA. Zn(2+) is required as a cofactor.

The protein resides in the cytoplasm. One of several proteins that assist in the late maturation steps of the functional core of the 30S ribosomal subunit. Helps release RbfA from mature subunits. May play a role in the assembly of ribosomal proteins into the subunit. Circularly permuted GTPase that catalyzes slow GTP hydrolysis, GTPase activity is stimulated by the 30S ribosomal subunit. The protein is Small ribosomal subunit biogenesis GTPase RsgA 2 of Listeria innocua serovar 6a (strain ATCC BAA-680 / CLIP 11262).